A 340-amino-acid polypeptide reads, in one-letter code: Anthranilate phosphoribosyltransferase (340 aa).

5-phospho-alpha-D-ribose 1-diphosphate contacts are provided by residues G84, 87-88 (GD), T92, 94-97 (NIST), 112-120 (KHGSRSVSS), and S124. Position 84 (G84) interacts with anthranilate. S96 serves as a coordination point for Mg(2+). Position 170 (R170) interacts with anthranilate. The Mg(2+) site is built by D228 and E229.

This sequence belongs to the anthranilate phosphoribosyltransferase family. In terms of assembly, homodimer. The cofactor is Mg(2+).

It carries out the reaction N-(5-phospho-beta-D-ribosyl)anthranilate + diphosphate = 5-phospho-alpha-D-ribose 1-diphosphate + anthranilate. Its pathway is amino-acid biosynthesis; L-tryptophan biosynthesis; L-tryptophan from chorismate: step 2/5. Functionally, catalyzes the transfer of the phosphoribosyl group of 5-phosphorylribose-1-pyrophosphate (PRPP) to anthranilate to yield N-(5'-phosphoribosyl)-anthranilate (PRA). The protein is Anthranilate phosphoribosyltransferase of Psychromonas ingrahamii (strain DSM 17664 / CCUG 51855 / 37).